Consider the following 448-residue polypeptide: Exodeoxyribonuclease 7 large subunit (448 aa).

Belongs to the XseA family. In terms of assembly, heterooligomer composed of large and small subunits.

The protein resides in the cytoplasm. It catalyses the reaction Exonucleolytic cleavage in either 5'- to 3'- or 3'- to 5'-direction to yield nucleoside 5'-phosphates.. Its function is as follows. Bidirectionally degrades single-stranded DNA into large acid-insoluble oligonucleotides, which are then degraded further into small acid-soluble oligonucleotides. The polypeptide is Exodeoxyribonuclease 7 large subunit (Nitrosomonas eutropha (strain DSM 101675 / C91 / Nm57)).